The chain runs to 157 residues: Glutathione peroxidase homolog BsaA (157 aa).

Cys-35 is a catalytic residue.

Belongs to the glutathione peroxidase family.

This Halalkalibacterium halodurans (strain ATCC BAA-125 / DSM 18197 / FERM 7344 / JCM 9153 / C-125) (Bacillus halodurans) protein is Glutathione peroxidase homolog BsaA (bsaA).